Here is a 338-residue protein sequence, read N- to C-terminus: Isopenicillin N synthase (338 aa).

Positions 89, 93, 185, and 191 each coordinate isopenicillin N. The N-[(5S)-5-amino-5-carboxypentanoyl]-L-cysteinyl-D-valine site is built by R89, Y93, S185, Y191, H216, and D218. The Fe2OG dioxygenase domain occupies 182 to 290; it reads TLSSVVLIRY…RQSLPFFVNL (109 aa). Fe(2+) is bound by residues H216, D218, and H272. Residue R281 participates in 2-oxoglutarate binding. Isopenicillin N is bound at residue S283. Residue S283 participates in N-[(5S)-5-amino-5-carboxypentanoyl]-L-cysteinyl-D-valine binding.

This sequence belongs to the iron/ascorbate-dependent oxidoreductase family. In terms of assembly, monomer. It depends on Fe(2+) as a cofactor.

It localises to the cytoplasm. Its subcellular location is the cytosol. It carries out the reaction N-[(5S)-5-amino-5-carboxypentanoyl]-L-cysteinyl-D-valine + O2 = isopenicillin N + 2 H2O. It participates in antibiotic biosynthesis; penicillin G biosynthesis; penicillin G from L-alpha-aminoadipate and L-cysteine and L-valine: step 2/3. Isopenicillin N synthase; part of the gene cluster that mediates the biosynthesis of penicillin, the world's most important antibiotic. IpnA catalyzes the cyclization of the tripeptide N-[(5S)-5-amino-5-carboxypentanoyl]-L-cysteinyl-D-valine (LLD-ACV or ACV) to form isopenicillin N (IPN) that contains the beta-lactam nucleus. The penicillin biosynthesis occurs via 3 enzymatic steps, the first corresponding to the production of the tripeptide N-[(5S)-5-amino-5-carboxypentanoyl]-L-cysteinyl-D-valine (LLD-ACV or ACV) by the NRPS pcbAB. The tripeptide ACV is then cyclized to isopenicillin N (IPN) by the isopenicillin N synthase pcbC that forms the beta-lactam nucleus. Finally, the alpha-aminoadipyl side chain is exchanged for phenylacetic acid by the isopenicillin N acyltransferase penDE to yield penicillin in the peroxisomal matrix. This Hapsidospora chrysogena (Acremonium chrysogenum) protein is Isopenicillin N synthase (PCBC).